A 743-amino-acid chain; its full sequence is Dolichyl-phosphooligosaccharide-protein glycotransferase 2 (743 aa).

The Cytoplasmic portion of the chain corresponds to methionine 1 to leucine 7. The chain crosses the membrane as a helical span at residues methionine 8–valine 28. A DXD motif 1 motif is present at residues glycine 29–aspartate 31. Residues glycine 29–threonine 91 are Extracellular-facing. Aspartate 31 serves as a coordination point for Mn(2+). Residues alanine 92 to leucine 112 traverse the membrane as a helical segment. Topologically, residues lysine 113–aspartate 119 are cytoplasmic. A helical transmembrane segment spans residues valine 120–alanine 140. Residues asparagine 141–arginine 144 lie on the Extracellular side of the membrane. 2 residues coordinate Mn(2+): arginine 144 and aspartate 146. The short motif at arginine 144–aspartate 146 is the DXD motif 2 element. Residues glycine 145 to lysine 165 form a helical membrane-spanning segment. The Cytoplasmic portion of the chain corresponds to threonine 166–tyrosine 170. Transmembrane regions (helical) follow at residues arginine 171–alanine 191 and tyrosine 192–leucine 212. Residues lysine 213–lysine 216 are Cytoplasmic-facing. Residues leucine 217–isoleucine 237 traverse the membrane as a helical segment. The Extracellular portion of the chain corresponds to leucine 238–tyrosine 272. A helical membrane pass occupies residues leucine 273 to isoleucine 293. Residues threonine 294–lysine 302 are Cytoplasmic-facing. The chain crosses the membrane as a helical span at residues valine 303–alanine 323. The Extracellular portion of the chain corresponds to leucine 324–proline 345. Positions threonine 333–glutamate 336 match the TIXE motif motif. Residues threonine 346–leucine 366 form a helical membrane-spanning segment. Residues arginine 367–serine 373 are Cytoplasmic-facing. A helical membrane pass occupies residues glycine 374–tyrosine 391. Residues tryptophan 392 to arginine 394 are Extracellular-facing. Residue arginine 394 coordinates a glycophospholipid. A helical membrane pass occupies residues phenylalanine 395–threonine 415. Topologically, residues arginine 416–arginine 424 are cytoplasmic. A helical membrane pass occupies residues isoleucine 425–serine 445. The Extracellular portion of the chain corresponds to valine 446–asparagine 743. Residues tryptophan 474–aspartate 476 form an interacts with target acceptor peptide in protein substrate region. The short motif at tryptophan 474–glycine 478 is the WWDYG motif element. The short motif at aspartate 526–isoleucine 533 is the DK motif element.

Belongs to the STT3 family. The cofactor is Mn(2+). Mg(2+) is required as a cofactor.

The protein localises to the cell membrane. It carries out the reaction an archaeal dolichyl phosphooligosaccharide + [protein]-L-asparagine = an archaeal dolichyl phosphate + a glycoprotein with the oligosaccharide chain attached by N-beta-D-glycosyl linkage to a protein L-asparagine.. It participates in protein modification; protein glycosylation. Functionally, oligosaccharyl transferase (OST) that catalyzes the initial transfer of a defined glycan (ManNAcXyl(2)GlcAMan(2)GalNAc in P.furiosus) from the lipid carrier dolichol-monophosphate to an asparagine residue within an Asn-X-Ser/Thr consensus motif in nascent polypeptide chains, the first step in protein N-glycosylation. The chain is Dolichyl-phosphooligosaccharide-protein glycotransferase 2 (aglB2) from Pyrococcus furiosus (strain ATCC 43587 / DSM 3638 / JCM 8422 / Vc1).